We begin with the raw amino-acid sequence, 88 residues long: Large ribosomal subunit protein eL37 (88 aa).

Zn(2+)-binding residues include cysteine 19, cysteine 22, cysteine 34, and cysteine 37. The C4-type zinc-finger motif lies at 19 to 37; the sequence is CNRCGKRSFHVQKKTCASC.

The protein belongs to the eukaryotic ribosomal protein eL37 family. Requires Zn(2+) as cofactor.

Functionally, binds to the 23S rRNA. This Debaryomyces hansenii (strain ATCC 36239 / CBS 767 / BCRC 21394 / JCM 1990 / NBRC 0083 / IGC 2968) (Yeast) protein is Large ribosomal subunit protein eL37 (RPL37).